The following is a 147-amino-acid chain: Hemoglobin subunit gamma (147 aa).

A Globin domain is found at 3 to 147 (HFTEEDKATI…VASALSSRYH (145 aa)). 2 residues coordinate heme b: histidine 64 and histidine 93.

The protein belongs to the globin family. In terms of assembly, heterotetramer of two alpha chains and two gamma chains in fetal hemoglobin (Hb F). As to expression, red blood cells.

Gamma chains make up the fetal hemoglobin F, in combination with alpha chains. In Macaca fuscata fuscata (Japanese macaque), this protein is Hemoglobin subunit gamma (HBG).